A 199-amino-acid chain; its full sequence is Recombination protein RecR (199 aa).

The C4-type zinc finger occupies 56-71; that stretch reads CAICGNVAEHEQCRIC. The region spanning 79–174 is the Toprim domain; the sequence is TVLCVVEEPK…RVTRLASGLP (96 aa).

This sequence belongs to the RecR family.

Functionally, may play a role in DNA repair. It seems to be involved in an RecBC-independent recombinational process of DNA repair. It may act with RecF and RecO. This Acidothermus cellulolyticus (strain ATCC 43068 / DSM 8971 / 11B) protein is Recombination protein RecR.